Reading from the N-terminus, the 1603-residue chain is MGVPTKISILGRESIVADFGIWRNYVAKDLLSNCASSTYILISDTNLTPLYLAGFQQSFENAAAGLSPKPRLLTYEIPPGESSKSRETKAEIEDWMLTRQPPCGRDTVIIALGGGVIGDLIGFVAATYMRGVRFVQVPTTLLAMVDSSIGGKTAIDTPNGKNLIGAIWQPQRIYLDMEFLNTLPEREFINGMAEVIKTAAISSEEKFAALENDADVILAAVKSKNTPDRLRFSSIQETLKRTILSSAEFKAQVVSADEREGGLRNLLNFGHSIGHAIEAILAPQVLHGECVSIGMVKEAELARHLGILNNVSVARIAKCLASYELPTSLKDERIKRLTAGKHCSVEQIITYMGVDKKNDGPKKKVVLLSAIGRTYEPRASTVSNEDLQVVLAPSIEVYPGFPKSLNVTCTPPGSKSISNRALVLAALGSGTCRIKNLLHSDDTEVMLTALERLGAATFSWESQGEVLVVNGNGGRMVASPKELYLGNAGTASRFLTTVATLAQKGSVASSVLTGNARMKQRPIGDLVDALKSNGADIEYLENPKSLPLKITASGGFAGGEMRLDAKVSSQYVTSLLMCAPYANEPVTLRLVGGKPVSQLYVDMTTAMMRSFGIDVKKSETEEHTYHIPRGVYKNPAEYVVESDASSATYPLAIAAMTGTSCTVPNIGSKSLQGDARFAIEVLRPMGCTVNQTDFSTSVTGTAGGKLKSLPTIDMEPMTDAFLTASVLAAVARGQGSNHTTRICGIANQRVKECNRIKAMKDELAKFGVTCREHDDGLEIDGIDRSTLRHPTEGVFCYDDHRVAMSFSVLALVAPQPTLILEKECVGKTWPGWWNTLAQTFKVKLDGKEVEVEEVEVEERAKTNGVAHLDKSAASIFIIGMRGAGKTTSGVWVSKALQRPFIDLDDELEKSEGMTIPEMIKQRGWEGFRDSELALLRRVMTEKPMGYIFACGGGVVELPEARELLTQYHKTKGNVILAMRDIKEVMDFLKIDKTRPAYVEDMMSVWLRRKPWYQECSNIQYYSRITQPDGMAQVLHGFNRFLKVITGQLDSLAQMRRKENTFFVSLTFPDLTPASNILKEVTLGSDAVELRVDLLKDPQSDSEIPSVDYVAEQISVLRSRVSVPLVFTIRTKSQGGRFPDDAYDAALQLYRLAIRMGSEFVDLELSFPKQLLRTVTEMKGFSKIIASHHDPEGLLSWANGSWIQIYNKALQYGDVIKLVGVAKTLDDNASLKKFKTWAEAKHDVPLIAINMGYKGQLSRILNGFMTPVSHPSLPFKAAPGQLSAREIRKGLSLMGEIKAKKFAVIGKPVSSSRSPAMHNALFKQMGLPHTYGRIETDNVEDVKEFILSPDFGGASVTIPLKLDIMPLLDEIAPEAEMIGAVNTIVSVPAAPGDKFQSSRLIGRNTDWQGMVRCLSDAGAYSAATPTTSSAGLIIGGGGTARAAIFALNSMSYSPIYIVGRSPEKLACMASSFPADYNIRIVDDVKALESLPMVAIGTIPGDKPIELHMREVLCEILSLCEKANVEAERKTGITPKRILLEMAYKPSVTSLMKLASDAGWTVLPGLEVLVAQGVYQSEYWTDITPVYENARKAVMGVSSSDDTIS.

The interval 1–384 is 3-dehydroquinate synthase; sequence MGVPTKISIL…YEPRASTVSN (384 aa). Residues 44-46, 81-84, 114-116, and Asp-119 contribute to the NAD(+) site; these read DTN, ESSK, and GGV. Arg-130 is a 7-phospho-2-dehydro-3-deoxy-D-arabino-heptonate binding site. 139-140 provides a ligand contact to NAD(+); the sequence is TT. 7-phospho-2-dehydro-3-deoxy-D-arabino-heptonate is bound by residues Asp-146 and Lys-152. Lys-161 is a binding site for NAD(+). 7-phospho-2-dehydro-3-deoxy-D-arabino-heptonate is bound at residue Asn-162. NAD(+)-binding positions include 179-182 and Asn-190; that span reads FLNT. Residue Glu-194 coordinates Zn(2+). 7-phospho-2-dehydro-3-deoxy-D-arabino-heptonate is bound by residues 194-197 and Lys-250; that span reads EVIK. The active-site Proton acceptor; for 3-dehydroquinate synthase activity is the Glu-260. Residues 264-268 and His-271 contribute to the 7-phospho-2-dehydro-3-deoxy-D-arabino-heptonate site; that span reads RNLLN. Residue His-271 participates in Zn(2+) binding. His-275 serves as the catalytic Proton acceptor; for 3-dehydroquinate synthase activity. 2 residues coordinate 7-phospho-2-dehydro-3-deoxy-D-arabino-heptonate: His-287 and Lys-356. A Zn(2+)-binding site is contributed by His-287. The tract at residues 397 to 842 is EPSP synthase; the sequence is VYPGFPKSLN…WNTLAQTFKV (446 aa). The active-site For EPSP synthase activity is Cys-824. The segment at 872–1064 is shikimate kinase; it reads AASIFIIGMR…RRKENTFFVS (193 aa). An ATP-binding site is contributed by 879–886; the sequence is GMRGAGKT. The segment at 1065–1285 is 3-dehydroquinase; sequence LTFPDLTPAS…AAPGQLSARE (221 aa). His-1188 functions as the Proton acceptor; for 3-dehydroquinate dehydratase activity in the catalytic mechanism. The Schiff-base intermediate with substrate; for 3-dehydroquinate dehydratase activity role is filled by Lys-1216. The interval 1298–1603 is shikimate dehydrogenase; it reads AKKFAVIGKP…GVSSSDDTIS (306 aa).

The protein in the N-terminal section; belongs to the sugar phosphate cyclases superfamily. Dehydroquinate synthase family. It in the 2nd section; belongs to the EPSP synthase family. This sequence in the 3rd section; belongs to the shikimate kinase family. In the 4th section; belongs to the type-I 3-dehydroquinase family. The protein in the C-terminal section; belongs to the shikimate dehydrogenase family. In terms of assembly, homodimer. The cofactor is Zn(2+).

It localises to the cytoplasm. The enzyme catalyses 7-phospho-2-dehydro-3-deoxy-D-arabino-heptonate = 3-dehydroquinate + phosphate. It catalyses the reaction 3-dehydroquinate = 3-dehydroshikimate + H2O. The catalysed reaction is shikimate + NADP(+) = 3-dehydroshikimate + NADPH + H(+). It carries out the reaction shikimate + ATP = 3-phosphoshikimate + ADP + H(+). The enzyme catalyses 3-phosphoshikimate + phosphoenolpyruvate = 5-O-(1-carboxyvinyl)-3-phosphoshikimate + phosphate. It functions in the pathway metabolic intermediate biosynthesis; chorismate biosynthesis; chorismate from D-erythrose 4-phosphate and phosphoenolpyruvate: step 2/7. It participates in metabolic intermediate biosynthesis; chorismate biosynthesis; chorismate from D-erythrose 4-phosphate and phosphoenolpyruvate: step 3/7. Its pathway is metabolic intermediate biosynthesis; chorismate biosynthesis; chorismate from D-erythrose 4-phosphate and phosphoenolpyruvate: step 4/7. The protein operates within metabolic intermediate biosynthesis; chorismate biosynthesis; chorismate from D-erythrose 4-phosphate and phosphoenolpyruvate: step 5/7. It functions in the pathway metabolic intermediate biosynthesis; chorismate biosynthesis; chorismate from D-erythrose 4-phosphate and phosphoenolpyruvate: step 6/7. The AROM polypeptide catalyzes 5 consecutive enzymatic reactions in prechorismate polyaromatic amino acid biosynthesis. This chain is Pentafunctional AROM polypeptide, found in Paracoccidioides brasiliensis (strain Pb03).